Reading from the N-terminus, the 107-residue chain is Universal stress protein B homolog (107 aa).

Helical transmembrane passes span 6–26 (TILF…LTAL) and 86–106 (VREL…AAFI).

The protein belongs to the universal stress protein B family.

It localises to the cell inner membrane. The sequence is that of Universal stress protein B homolog from Vibrio parahaemolyticus serotype O3:K6 (strain RIMD 2210633).